The following is a 419-amino-acid chain: UDP-N-acetylglucosamine 1-carboxyvinyltransferase 2 (419 aa).

Residue 22 to 23 coordinates phosphoenolpyruvate; the sequence is KN. R92 lines the UDP-N-acetyl-alpha-D-glucosamine pocket. C116 serves as the catalytic Proton donor. Position 116 is a 2-(S-cysteinyl)pyruvic acid O-phosphothioketal (C116). UDP-N-acetyl-alpha-D-glucosamine-binding positions include 121–125, D306, and I328; that span reads RPIDL.

The protein belongs to the EPSP synthase family. MurA subfamily.

The protein resides in the cytoplasm. It catalyses the reaction phosphoenolpyruvate + UDP-N-acetyl-alpha-D-glucosamine = UDP-N-acetyl-3-O-(1-carboxyvinyl)-alpha-D-glucosamine + phosphate. It participates in cell wall biogenesis; peptidoglycan biosynthesis. Its function is as follows. Cell wall formation. Adds enolpyruvyl to UDP-N-acetylglucosamine. The chain is UDP-N-acetylglucosamine 1-carboxyvinyltransferase 2 from Streptococcus pyogenes serotype M1.